Here is a 149-residue protein sequence, read N- to C-terminus: Large ribosomal subunit protein bL9 (149 aa).

Belongs to the bacterial ribosomal protein bL9 family.

Functionally, binds to the 23S rRNA. The sequence is that of Large ribosomal subunit protein bL9 from Klebsiella pneumoniae subsp. pneumoniae (strain ATCC 700721 / MGH 78578).